The following is a 1426-amino-acid chain: Phospholipid-transporting ATPase VD (1426 aa).

The Cytoplasmic portion of the chain corresponds to 1–97; that stretch reads MTEALQWARY…PRNLFEQFHR (97 aa). Residues 98–118 traverse the membrane as a helical segment; the sequence is AANLYFLFLVVLNWVPLVEAF. The Exoplasmic loop portion of the chain corresponds to 119–121; the sequence is QKE. A helical transmembrane segment spans residues 122 to 142; it reads ITMLPLVVVLTIIAIKDGLED. Topologically, residues 143 to 321 are cytoplasmic; that stretch reads YRKYKIDKQI…SKLERRANTD (179 aa). The helical transmembrane segment at 322–342 threads the bilayer; the sequence is VLWCVMLLVIMCLTGAVGHGI. Residues 343–365 lie on the Exoplasmic loop side of the membrane; sequence WLSRYEKMHFFNVPEPDGHIISP. A helical transmembrane segment spans residues 366–386; the sequence is LLAGFYMFWTMIILLQVLIPI. At 387 to 1113 the chain is on the cytoplasmic side; that stretch reads SLYVSIEIVK…HWCYTRLSNM (727 aa). Asp-438 functions as the 4-aspartylphosphate intermediate in the catalytic mechanism. ATP is bound by residues Asp-438, Lys-439, and Thr-440. Mg(2+) is bound at residue Asp-438. Position 440 (Thr-440) interacts with Mg(2+). The tract at residues 506 to 531 is disordered; it reads NGPLGNKPSNHLAGSSFTLGSGEGAS. Residues 512-524 show a composition bias toward polar residues; that stretch reads KPSNHLAGSSFTL. Residues Glu-730, Phe-772, Lys-796, Arg-840, Thr-920, Gly-921, Asp-922, 996-1003, Arg-1030, and Lys-1036 contribute to the ATP site; that span reads GLIITGKT. Residue Asp-1056 participates in Mg(2+) binding. Residues Asn-1059 and Asp-1060 each contribute to the ATP site. Asp-1060 is a binding site for Mg(2+). The chain crosses the membrane as a helical span at residues 1114 to 1134; it reads ILYFFYKNVAYVNLLFWYQFF. Residues 1135 to 1145 lie on the Exoplasmic loop side of the membrane; the sequence is CGFSGTSMTDY. The chain crosses the membrane as a helical span at residues 1146-1166; that stretch reads WVLIFFNLLFTSAPPVIYGVL. Topologically, residues 1167 to 1195 are cytoplasmic; sequence EKDVSAETLMQLPELYRSGQKSEAYLPHT. Residues 1196-1216 traverse the membrane as a helical segment; it reads FWITLLDAFYQSLVCFFVPYF. The Exoplasmic loop portion of the chain corresponds to 1217 to 1224; it reads TYQGSDTD. The helical transmembrane segment at 1225 to 1245 threads the bilayer; that stretch reads IFAFGNPLNTAALFIVLLHLV. At 1246 to 1252 the chain is on the cytoplasmic side; that stretch reads IESKSLT. Residues 1253–1273 form a helical membrane-spanning segment; the sequence is WIHLLVIIGSILSYFLFAIVF. Residues 1274–1292 lie on the Exoplasmic loop side of the membrane; sequence GAMCVTCNPPSNPYWIMQE. Residues 1293 to 1313 form a helical membrane-spanning segment; it reads HMLDPVFYLVCILTTSIALLP. The Cytoplasmic portion of the chain corresponds to 1314 to 1426; it reads RFVYRVLQGS…MAGPSKGKES (113 aa). An ATP-binding site is contributed by 1364-1371; that stretch reads ANQSAGKS.

It belongs to the cation transport ATPase (P-type) (TC 3.A.3) family. Type IV subfamily. In terms of assembly, component of a P4-ATPase flippase complex which consists of a catalytic alpha subunit ATP10A and an accessory beta subunit TMEM30A. The cofactor is Mg(2+). In terms of processing, autophosphorylated at the conserved aspartate of the P-type ATPase signature sequence. As to expression, expressed in placenta and, to a lesser extent, in kidney.

The protein resides in the cell membrane. Its subcellular location is the endoplasmic reticulum membrane. The enzyme catalyses ATP + H2O + phospholipidSide 1 = ADP + phosphate + phospholipidSide 2.. It catalyses the reaction a beta-D-glucosyl-(1&lt;-&gt;1')-N-acylsphing-4-enine(out) + ATP + H2O = a beta-D-glucosyl-(1&lt;-&gt;1')-N-acylsphing-4-enine(in) + ADP + phosphate + H(+). Its function is as follows. Catalytic component of a P4-ATPase flippase complex, which catalyzes the hydrolysis of ATP coupled to the transport of glucosylceramide (GlcCer) from the outer to the inner leaflet of the plasma membrane. In Homo sapiens (Human), this protein is Phospholipid-transporting ATPase VD.